The primary structure comprises 288 residues: G1/S-specific cyclin-D2 (288 aa).

In terms of domain architecture, Cyclin N-terminal spans 26–151; sequence LQNLLTIEER…VLGKLKWNLA (126 aa). Residues 264–288 are disordered; that stretch reads QHNGSKSVEDPDQATTPTDVRDVDL. Ser-270 is modified (phosphoserine). Position 279 is a phosphothreonine (Thr-279).

This sequence belongs to the cyclin family. Cyclin D subfamily. In terms of assembly, interacts with either CDK4 or CDK6 protein kinase to form a serine/threonine kinase holoenzyme complex. The cyclin subunit imparts substrate specificity to the complex. In terms of processing, phosphorylation at Thr-279 by MAP kinases is required for ubiquitination and degradation by the DCX(AMBRA1) complex. Ubiquitinated by the DCX(AMBRA1) complex during the transition from G1 to S cell phase, leading to its degradation: ubiquitination is dependent on Thr-279 phosphorylation. The DCX(AMBRA1) complex represents the major regulator of CCND2 stability during the G1/S transition. Polyubiquitinated by the SCF(FBXL2) complex, leading to proteasomal degradation.

The protein resides in the nucleus. The protein localises to the cytoplasm. It is found in the nucleus membrane. In terms of biological role, regulatory component of the cyclin D2-CDK4 (DC) complex that phosphorylates and inhibits members of the retinoblastoma (RB) protein family including RB1 and regulates the cell-cycle during G(1)/S transition. Phosphorylation of RB1 allows dissociation of the transcription factor E2F from the RB/E2F complex and the subsequent transcription of E2F target genes which are responsible for the progression through the G(1) phase. Hypophosphorylates RB1 in early G(1) phase. Cyclin D-CDK4 complexes are major integrators of various mitogenenic and antimitogenic signals. In Rattus norvegicus (Rat), this protein is G1/S-specific cyclin-D2 (Ccnd2).